Here is a 288-residue protein sequence, read N- to C-terminus: Killer cell lectin-like receptor 2 (288 aa).

Residues 1–45 lie on the Cytoplasmic side of the membrane; it reads MSEQEVTYTTLRFHKSSGLQNPVRPEETQRPRDVGHRECSVPWKF. The helical; Signal-anchor for type II membrane protein transmembrane segment at 46–66 threads the bilayer; that stretch reads IVIVLGILCFLLLLTVAVLVI. The Extracellular segment spans residues 67-288; sequence HIFRDGQEKH…SALQRDEDES (222 aa). N-linked (GlcNAc...) asparagine glycans are attached at residues N94, N105, and N114. The region spanning 144–263 is the C-type lectin domain; sequence QVEGYWFCCG…THGCICEKRL (120 aa). Disulfide bonds link C151–C156, C169–C257, C173–C259, and C238–C251. Residue N177 is glycosylated (N-linked (GlcNAc...) asparagine).

In terms of assembly, homodimer; disulfide-linked.

The protein localises to the membrane. Functionally, receptor on natural killer (NK) cells for class I MHC. The protein is Killer cell lectin-like receptor 2 (Klra2) of Mus musculus (Mouse).